Here is a 162-residue protein sequence, read N- to C-terminus: tRNA (cytidine(34)-2'-O)-methyltransferase (162 aa).

S-adenosyl-L-methionine is bound by residues L80, G102, L124, and S132.

This sequence belongs to the class IV-like SAM-binding methyltransferase superfamily. RNA methyltransferase TrmH family. TrmL subfamily. Homodimer.

The protein resides in the cytoplasm. It carries out the reaction cytidine(34) in tRNA + S-adenosyl-L-methionine = 2'-O-methylcytidine(34) in tRNA + S-adenosyl-L-homocysteine + H(+). The catalysed reaction is 5-carboxymethylaminomethyluridine(34) in tRNA(Leu) + S-adenosyl-L-methionine = 5-carboxymethylaminomethyl-2'-O-methyluridine(34) in tRNA(Leu) + S-adenosyl-L-homocysteine + H(+). In terms of biological role, methylates the ribose at the nucleotide 34 wobble position in the two leucyl isoacceptors tRNA(Leu)(CmAA) and tRNA(Leu)(cmnm5UmAA). Catalyzes the methyl transfer from S-adenosyl-L-methionine to the 2'-OH of the wobble nucleotide. In Acidovorax sp. (strain JS42), this protein is tRNA (cytidine(34)-2'-O)-methyltransferase.